Here is a 536-residue protein sequence, read N- to C-terminus: SNW domain-containing protein 1 (536 aa).

The tract at residues 1-44 (MALTSFLPAPTQLSQDQLEAEERARSQRSLQTSLVSSRREPPPY) is disordered. A2 carries the post-translational modification N-acetylalanine. S14 carries the post-translational modification Phosphoserine. The span at 27–36 (QRSLQTSLVS) shows a compositional bias: polar residues. Residues 59–79 (GDGGAFPEIHVAQYPLDMGRK) are interaction with PPIL1. Glycyl lysine isopeptide (Lys-Gly) (interchain with G-Cter in SUMO2) cross-links involve residues K81, K97, K115, K122, K141, K158, and K170. The segment at 174–339 (AQYIRYTPSQ…KARERRAGIK (166 aa)) is SNW. S182 and S190 each carry phosphoserine. A Glycyl lysine isopeptide (Lys-Gly) (interchain with G-Cter in SUMO2) cross-link involves residue K193. The disordered stretch occupies residues 212–233 (FKINKKIPRGPPSPPAPVMHSP). 3 positions are modified to phosphoserine: S224, S232, and S234. Glycyl lysine isopeptide (Lys-Gly) (interchain with G-Cter in SUMO2) cross-links involve residues K240, K258, K286, K339, K344, K416, and K441. Positions 311-386 (KMAQKEKEKH…RSKLQRNENR (76 aa)) are disordered. At S446 the chain carries Phosphoserine. K452 participates in a covalent cross-link: Glycyl lysine isopeptide (Lys-Gly) (interchain with G-Cter in SUMO2). Composition is skewed to basic and acidic residues over residues 467–489 (IKTNRFVPDKEFSGSDRKQRGRE) and 503–530 (KFLEEAKQHGGSKRPSDSSRPKEHEHEG). Residues 467 to 536 (IKTNRFVPDK…EHEGKKRRKE (70 aa)) are disordered. Phosphoserine occurs at positions 479 and 481. K509 is covalently cross-linked (Glycyl lysine isopeptide (Lys-Gly) (interchain with G-Cter in SUMO2)).

It belongs to the SNW family. As to quaternary structure, identified in the spliceosome C complex. Associates with U4/U6-U5 tri-small nuclear ribonucleoproteins (U4/U6-U5 tri-snRNPs). Component of the minor spliceosome, which splices U12-type introns. Interacts with SKI, SMAD2,SMAD3, RBPJ, RB1, PABPN1, MAGEA1, SIRT1, FOXN3, U2AF2, PPIL1, DAXX and ATP1B4. Interacts with VDR and RXRA; preferentially associates with VDR:RXRA heterodimers. Interacts with NCOR2. Interacts with MAML1. Interacts with NOTCH1 NICD; the interaction involves multimerized NOTCH1 NICD. Forms a complex with NOTCH1 NICD and MAML1; the association is dissociated by RBPJ. Associates with positive transcription elongation factor b (P-TEFb). Component of the SNARP complex which consists at least of SNIP1, SNW1, THRAP3, BCLAF1 and PNN.

It localises to the nucleus. In terms of biological role, involved in pre-mRNA splicing as component of the spliceosome. As a component of the minor spliceosome, involved in the splicing of U12-type introns in pre-mRNAs. Required in the specific splicing of CDKN1A pre-mRNA; the function probably involves the recruitment of U2AF2 to the mRNA. May recruit PPIL1 to the spliceosome. May be involved in cyclin-D1/CCND1 mRNA stability through the SNARP complex which associates with both the 3'end of the CCND1 gene and its mRNA. Involved in transcriptional regulation. Modulates TGF-beta-mediated transcription via association with SMAD proteins, MYOD1-mediated transcription via association with PABPN1, RB1-mediated transcriptional repression, and retinoid-X receptor (RXR)- and vitamin D receptor (VDR)-dependent gene transcription in a cell line-specific manner probably involving coactivators NCOA1 and GRIP1. Is involved in NOTCH1-mediated transcriptional activation. Binds to multimerized forms of Notch intracellular domain (NICD) and is proposed to recruit transcriptional coactivators such as MAML1 to form an intermediate preactivation complex which associates with DNA-bound CBF-1/RBPJ to form a transcriptional activation complex by releasing SNW1 and redundant NOTCH1 NICD. This Mus musculus (Mouse) protein is SNW domain-containing protein 1 (Snw1).